A 116-amino-acid chain; its full sequence is Putative pterin-4-alpha-carbinolamine dehydratase (116 aa).

The protein belongs to the pterin-4-alpha-carbinolamine dehydratase family.

It catalyses the reaction (4aS,6R)-4a-hydroxy-L-erythro-5,6,7,8-tetrahydrobiopterin = (6R)-L-erythro-6,7-dihydrobiopterin + H2O. This chain is Putative pterin-4-alpha-carbinolamine dehydratase, found in Xylella fastidiosa (strain M23).